The chain runs to 721 residues: MGPLDVWDLSPLLSLWMNRFYIYMGCALGLTLCICVQIIKKQVTRSQEKRVPGAPDSSLSPQKKQTHVSGVKIFYGSQTGTAKGFAVVLAKAVTSLDLPVAIINLKEYDPDDSLIGEITSKTVCAFLVATYTDGCPTESAEWFCKWLEESANDFRFGKTYLKGLRYAVFGLGDSAYRSHFNKVSTNVDKWLWMLGAQRVLTRGEGDCNAVQSKHGSIEADFTAWKTKFISRLQALQRGEKKACGGNCKRGKCESAQHGPGEARPHPQGELHPGDAEEEEPCESSSEDELGTQDYQSLTSVVDVEDLGNIMNPVKREKREKSHQDGKAAMQRNPEKTEDGEGRAMITPALREALTKQGYQLIGSHSGVKLCRWTKSMLRGRGGCYKHTFYGIESHRCMEATPSLACANKCVFCWRHHTNPVGTEWRWKMDQPELILKEAIENHQNMIKQFKGVPGLKAERFEEGMEVKHCALSLVGEPIMYPEINRLLKLLHQHGISSFLVTNAQFPEEIRKLTPVTQLYVSVDASTRDGLKKIDRPLFKDFWQRFLDSLKALSAKQQRTVYRLTLVKCWNVDELQAYAELVSLGNPDFIEVKGVTYCGESAASSLTMANVPWHEEVVRFVRELVDLLPDYEVACEHEHSNCLLIGHKKFKIDGEWWTWINYSRFQELVLQYEESGGSKTFSSRDYMARTPQWALFGARERGFDPKDTRYQRKNKTKDISGC.

The Flavodoxin-like domain maps to 71–229 (VKIFYGSQTG…DFTAWKTKFI (159 aa)). Residues 77-81 (SQTGT) and 168-200 (VFGLGDSAYRSHFNKVSTNVDKWLWMLGAQRVL) each bind FMN. Disordered stretches follow at residues 242–291 (ACGG…ELGT) and 305–339 (DLGNIMNPVKREKREKSHQDGKAAMQRNPEKTEDG). Basic and acidic residues predominate over residues 250–274 (GKCESAQHGPGEARPHPQGELHPGD). Positions 275–290 (AEEEEPCESSSEDELG) are enriched in acidic residues. Positions 313–325 (VKREKREKSHQDG) are enriched in basic and acidic residues. The 247-residue stretch at 389 to 635 (YGIESHRCME…LLPDYEVACE (247 aa)) folds into the Radical SAM core domain. [4Fe-4S] cluster contacts are provided by C405, C409, and C412.

It belongs to the TYW1 family. The cofactor is [4Fe-4S] cluster.

It catalyses the reaction N(1)-methylguanosine(37) in tRNA(Phe) + pyruvate + S-adenosyl-L-methionine = 4-demethylwyosine(37) in tRNA(Phe) + 5'-deoxyadenosine + L-methionine + CO2 + H2O. It functions in the pathway tRNA modification; wybutosine-tRNA(Phe) biosynthesis. Its function is as follows. Probable component of the wybutosine biosynthesis pathway. Wybutosine is a hyper modified guanosine with a tricyclic base found at the 3'-position adjacent to the anticodon of eukaryotic phenylalanine tRNA. Catalyzes the condensation of N-methylguanine with 2 carbon atoms from pyruvate to form the tricyclic 4-demethylwyosine, an intermediate in wybutosine biosynthesis. This is S-adenosyl-L-methionine-dependent tRNA 4-demethylwyosine synthase TYW1 (Tyw1) from Mus musculus (Mouse).